The chain runs to 391 residues: MDLIETVNACVGLQKRVLKLAPNTNLNTAGQSVLNDYNALASRVNGRTYALLDQTAVYTPYTVNAPIISLAVRISTDDYDDMRSGIDSILDILAAAIRTEGSRPTRVIERRVIEPNVKQLVEDLKLKSLTSEISIANMAAVDTALIQPEIIETENPLFADIIEQVIHRPNASMTGGNIRATLGRWSGNKGIVTCMSGMDSEHRFTVDFKTRTCGIINVVYAPTAGVIMIPMPTGRNREGHLIDVSAEMMAENFAIDFMDDDDIIQTETGVGVFSFPMCNRIRFRINPWDMQKHNDNLWTVNLANWPQGTSPRQPAISFLFETRRTFTEGDYQHLSRCAPKVQYMMDTIFPETAFTNRPVVDWNVQSLLTSSSQKTWCQKIAMLIAAYAAKI.

This sequence belongs to the rotavirus VP6 family. In terms of assembly, homotrimer. Interacts with the inner capsid protein VP2. Interacts with the outer capsid glycoprotein VP7.

It localises to the virion. Its function is as follows. Intermediate capsid protein that self assembles to form an icosahedral capsid with a T=13 symmetry, which consists of 230 trimers of VP6, with channels at each of its five-fold vertices. This capsid constitutes the middle concentric layer of the viral mature particle. The innermost VP2 capsid and the intermediate VP6 capsid remain intact following cell entry to protect the dsRNA from degradation and to prevent unfavorable antiviral responses in the host cell during all the replication cycle of the virus. Nascent transcripts are transcribed within the structural confines of this double-layered particle (DLP) and are extruded through the channels at the five-fold axes. VP6 is required for the transcription activity of the DLP. The chain is Intermediate capsid protein VP6 from Rotavirus B (isolate RVB/Rat/United States/IDIR/1984/G1P[X]) (RV-B).